A 244-amino-acid chain; its full sequence is tRNA pseudouridine synthase A (244 aa).

Asp52 (nucleophile) is an active-site residue. Tyr110 is a binding site for substrate.

Belongs to the tRNA pseudouridine synthase TruA family. In terms of assembly, homodimer.

It carries out the reaction uridine(38/39/40) in tRNA = pseudouridine(38/39/40) in tRNA. In terms of biological role, formation of pseudouridine at positions 38, 39 and 40 in the anticodon stem and loop of transfer RNAs. This Geotalea daltonii (strain DSM 22248 / JCM 15807 / FRC-32) (Geobacter daltonii) protein is tRNA pseudouridine synthase A.